The following is a 685-amino-acid chain: Mannan-binding lectin serine protease 2 (685 aa).

The signal sequence occupies residues 1-19 (MRLLIFLGLLWSLVATLLG). In terms of domain architecture, CUB 1 spans 20 to 137 (SKWPEPVFGR…TGFEAFYAAE (118 aa)). Ca(2+)-binding residues include glutamate 67 and aspartate 75. Cysteine 72 and cysteine 90 are oxidised to a cystine. N-linked (GlcNAc...) asparagine glycosylation occurs at asparagine 103. Aspartate 120, serine 122, asparagine 123, aspartate 138, and glutamate 141 together coordinate Ca(2+). An EGF-like; calcium-binding domain is found at 138 to 181 (DVDECRVSLGDSVPCDHYCHNYLGGYYCSCRAGYVLHQNKHTCS). 5 disulfides stabilise this stretch: cysteine 142-cysteine 156, cysteine 152-cysteine 165, cysteine 167-cysteine 180, cysteine 184-cysteine 211, and cysteine 241-cysteine 259. Ca(2+) is bound by residues asparagine 158 and glycine 162. At asparagine 158 the chain carries (3R)-3-hydroxyasparagine. A CUB 2 domain is found at 184–296 (CSGQVFTGRS…TGWKIHYTST (113 aa)). N-linked (GlcNAc...) asparagine glycans are attached at residues asparagine 285 and asparagine 308. Sushi domains follow at residues 298 to 363 (RPCP…ECSI) and 364 to 431 (IDCG…VCEP). 7 disulfides stabilise this stretch: cysteine 300-cysteine 348, cysteine 328-cysteine 361, cysteine 366-cysteine 411, cysteine 396-cysteine 429, cysteine 433-cysteine 552, cysteine 598-cysteine 617, and cysteine 628-cysteine 659. The 240-residue stretch at 444–683 (IVGGQPAKPG…YIPWIENIIS (240 aa)) folds into the Peptidase S1 domain. Catalysis depends on charge relay system residues histidine 483 and aspartate 532. An N-linked (GlcNAc...) asparagine glycan is attached at asparagine 545. Serine 632 serves as the catalytic Charge relay system. An N-linked (GlcNAc...) asparagine glycan is attached at asparagine 641.

Belongs to the peptidase S1 family. Homodimer; disulfide-linked. Binds MBL2. Isoform 2 binds to MASP1. Binds SERPING1. In terms of processing, the iron and 2-oxoglutarate dependent 3-hydroxylation of aspartate and asparagine is (R) stereospecific within EGF domains. Plasma.

It localises to the secreted. It catalyses the reaction Selective cleavage after Arg-223 in complement component C2 (-Ser-Leu-Gly-Arg-|-Lys-Ile-Gln-Ile) and after Arg-76 in complement component C4 (-Gly-Leu-Gln-Arg-|-Ala-Leu-Glu-Ile).. Its function is as follows. Serum protease that plays an important role in the activation of the complement system via mannose-binding lectin. After activation by auto-catalytic cleavage it cleaves C2 and C4, leading to their activation and to the formation of C3 convertase. The polypeptide is Mannan-binding lectin serine protease 2 (Masp2) (Mus musculus (Mouse)).